The following is a 176-amino-acid chain: F(420)H(2) dehydrogenase subunit J (176 aa).

5 helical membrane passes run 13–33, 39–59, 64–84, 99–119, and 140–160; these read TAVFGLLALVTVFFAIFVVIA, AGLALIMCMFGVAGLYILLNA, VIQVLVYIGAIGVLILFAVML, PLAFLVCLLFVAVVVTGAFGT, and IGMLIFTHFVAPFEVLSIVLL.

Belongs to the complex I subunit 6 family. As to quaternary structure, the FPO complex is composed of at least 13 different subunits. FpoA, FpoH, FpoJ, FpoK, FpoL, FpoM and FpoN proteins constitute the membrane sector of the complex.

The protein resides in the cell membrane. It catalyses the reaction methanophenazine + reduced coenzyme F420-(gamma-L-Glu)(n) = dihydromethanophenazine + oxidized coenzyme F420-(gamma-L-Glu)(n) + H(+). Its function is as follows. Component of the F(420)H(2) dehydrogenase (FPO complex) which is part of the energy-conserving F(420)H(2):heterodisulfide oxidoreductase system. The membrane-bound electron transfer system of the complex plays an important role in the metabolism of methylotrophic methanogens when the organisms grow on methanol or methylamines. Catalyzes the oxidation of methanophenazine to dihydromethanophenazine. It shuttles electrons from F(420)H(2), via FAD and iron-sulfur (Fe-S) centers, to methanophenazine (an electron carrier in the membrane). It couples the redox reaction to proton translocation (for every two electrons transferred, two hydrogen ions are translocated across the cytoplasmic membrane), and thus conserves the redox energy in a proton gradient. It also catalyzes the oxidation of F(420)H(2) with quinones such as 2,3-dimethyl-1,4-naphthoquinone, 2-methyl-1,4-naphthoquinone and tetramethyl-p-benzoquinone. This chain is F(420)H(2) dehydrogenase subunit J (fpoJ), found in Methanosarcina mazei (strain ATCC BAA-159 / DSM 3647 / Goe1 / Go1 / JCM 11833 / OCM 88) (Methanosarcina frisia).